Here is a 130-residue protein sequence, read N- to C-terminus: Succinate dehydrogenase cytochrome b556 subunit (130 aa).

Topologically, residues 1–26 (MADVNRGNRPLSPHLQVYRLPLAAIT) are cytoplasmic. A helical transmembrane segment spans residues 27–52 (SIMTRITGHALVAGIVLITWWLVAAV). Over 53–68 (TSPGAFACADWVVRSW) the chain is Periplasmic. Residues 69 to 89 (LGFIILTGSMWALWYHLLAGL) form a helical membrane-spanning segment. Residue histidine 84 participates in heme binding. The Cytoplasmic segment spans residues 90 to 109 (RHLFYDAGYGLEIEQAHKSS). The chain crosses the membrane as a helical span at residues 110–130 (QALIAGSVVLAVLTLIVFFVF).

This sequence belongs to the cytochrome b560 family. Part of an enzyme complex containing four subunits: a flavoprotein, an iron-sulfur protein, plus two membrane-anchoring proteins, SdhC and SdhD. The complex can form homotrimers. Requires heme as cofactor.

Its subcellular location is the cell inner membrane. The protein operates within carbohydrate metabolism; tricarboxylic acid cycle. In terms of biological role, membrane-anchoring subunit of succinate dehydrogenase (SDH). The protein is Succinate dehydrogenase cytochrome b556 subunit (sdhC) of Paracoccus denitrificans.